The chain runs to 121 residues: Ubiquitin-related modifier 1 (121 aa).

Gly-121 carries the 1-thioglycine modification. Gly-121 participates in a covalent cross-link: Glycyl lysine isopeptide (Gly-Lys) (interchain with K-? in acceptor proteins).

The protein belongs to the URM1 family. C-terminal thiocarboxylation occurs in 2 steps, it is first acyl-adenylated (-COAMP) via the hesA/moeB/thiF part of UBA4, then thiocarboxylated (-COSH) via the rhodanese domain of UBA4.

It localises to the cytoplasm. Its pathway is tRNA modification; 5-methoxycarbonylmethyl-2-thiouridine-tRNA biosynthesis. Its function is as follows. Acts as a sulfur carrier required for 2-thiolation of mcm(5)S(2)U at tRNA wobble positions of cytosolic tRNA(Lys), tRNA(Glu) and tRNA(Gln). Serves as sulfur donor in tRNA 2-thiolation reaction by being thiocarboxylated (-COSH) at its C-terminus by the MOCS3 homolog UBA4. The sulfur is then transferred to tRNA to form 2-thiolation of mcm(5)S(2)U. Prior mcm(5) tRNA modification by the elongator complex is required for 2-thiolation. Also acts as a ubiquitin-like protein (UBL) that is covalently conjugated via an isopeptide bond to lysine residues of target proteins such as AHP1. The thiocarboxylated form serves as substrate for conjugation and oxidative stress specifically induces the formation of UBL-protein conjugates. The polypeptide is Ubiquitin-related modifier 1 (Ajellomyces capsulatus (strain NAm1 / WU24) (Darling's disease fungus)).